Consider the following 201-residue polypeptide: 3-isopropylmalate dehydratase small subunit (201 aa).

This sequence belongs to the LeuD family. LeuD type 1 subfamily. In terms of assembly, heterodimer of LeuC and LeuD.

The catalysed reaction is (2R,3S)-3-isopropylmalate = (2S)-2-isopropylmalate. It functions in the pathway amino-acid biosynthesis; L-leucine biosynthesis; L-leucine from 3-methyl-2-oxobutanoate: step 2/4. Catalyzes the isomerization between 2-isopropylmalate and 3-isopropylmalate, via the formation of 2-isopropylmaleate. The protein is 3-isopropylmalate dehydratase small subunit of Brucella abortus (strain S19).